Consider the following 166-residue polypeptide: MSEPTSSRPAYARLLDRAVRILAVRDHSEQELRRKLSAPVMGKNGPEEIDATADDYERVIAWCHEHHYLDDERFVMRFIASRSRKGYGPARIRQELNQKGISRESTEKTMRECEIDWSEMAREQAVRKYGEPLPSNFSEKVKVQRFLLYRGYLMDDIQQIWRNFAD.

Belongs to the RecX family.

Its subcellular location is the cytoplasm. Modulates RecA activity. This is Regulatory protein RecX from Salmonella newport (strain SL254).